Consider the following 166-residue polypeptide: Small ribosomal subunit protein uS5 (166 aa).

In terms of domain architecture, S5 DRBM spans 11 to 74; it reads FLEKLIAVNR…EKARRNMVDV (64 aa).

Belongs to the universal ribosomal protein uS5 family. Part of the 30S ribosomal subunit. Contacts proteins S4 and S8.

Functionally, with S4 and S12 plays an important role in translational accuracy. In terms of biological role, located at the back of the 30S subunit body where it stabilizes the conformation of the head with respect to the body. The protein is Small ribosomal subunit protein uS5 of Alteromonas mediterranea (strain DSM 17117 / CIP 110805 / LMG 28347 / Deep ecotype).